Here is a 275-residue protein sequence, read N- to C-terminus: 4-hydroxy-tetrahydrodipicolinate reductase (275 aa).

Residues 8–13 (GATGRM), 100–102 (GTT), and 126–129 (SPNM) contribute to the NAD(+) site. H160 (proton donor/acceptor) is an active-site residue. (S)-2,3,4,5-tetrahydrodipicolinate is bound at residue H161. Residue K164 is the Proton donor of the active site. A (S)-2,3,4,5-tetrahydrodipicolinate-binding site is contributed by 170-171 (GT).

It belongs to the DapB family.

It localises to the cytoplasm. The catalysed reaction is (S)-2,3,4,5-tetrahydrodipicolinate + NAD(+) + H2O = (2S,4S)-4-hydroxy-2,3,4,5-tetrahydrodipicolinate + NADH + H(+). It carries out the reaction (S)-2,3,4,5-tetrahydrodipicolinate + NADP(+) + H2O = (2S,4S)-4-hydroxy-2,3,4,5-tetrahydrodipicolinate + NADPH + H(+). It participates in amino-acid biosynthesis; L-lysine biosynthesis via DAP pathway; (S)-tetrahydrodipicolinate from L-aspartate: step 4/4. Functionally, catalyzes the conversion of 4-hydroxy-tetrahydrodipicolinate (HTPA) to tetrahydrodipicolinate. This chain is 4-hydroxy-tetrahydrodipicolinate reductase, found in Methanopyrus kandleri (strain AV19 / DSM 6324 / JCM 9639 / NBRC 100938).